The sequence spans 188 residues: Putative manganese efflux pump MntP (188 aa).

Transmembrane regions (helical) follow at residues 3-23 (MITL…VALG), 39-59 (LGWH…LAGL), 65-85 (IETY…GKMI), 104-124 (GMSL…VGLS), 125-145 (LAIV…IAGV), and 167-187 (IAGG…HTLG).

This sequence belongs to the MntP (TC 9.B.29) family.

Its subcellular location is the cell inner membrane. Functionally, probably functions as a manganese efflux pump. The chain is Putative manganese efflux pump MntP from Syntrophotalea carbinolica (strain DSM 2380 / NBRC 103641 / GraBd1) (Pelobacter carbinolicus).